A 332-amino-acid chain; its full sequence is Ribosomal RNA small subunit methyltransferase H (332 aa).

Residues 36-38, aspartate 54, phenylalanine 81, aspartate 102, and glutamine 109 contribute to the S-adenosyl-L-methionine site; that span reads GGY. The disordered stretch occupies residues 284 to 332; the sequence is VTAGQEEVSANPRARSAKLRAAERTAAPATADDGESPGWPSLANVMRGG.

This sequence belongs to the methyltransferase superfamily. RsmH family.

The protein localises to the cytoplasm. It catalyses the reaction cytidine(1402) in 16S rRNA + S-adenosyl-L-methionine = N(4)-methylcytidine(1402) in 16S rRNA + S-adenosyl-L-homocysteine + H(+). Functionally, specifically methylates the N4 position of cytidine in position 1402 (C1402) of 16S rRNA. The polypeptide is Ribosomal RNA small subunit methyltransferase H (Nitrobacter hamburgensis (strain DSM 10229 / NCIMB 13809 / X14)).